The following is a 739-amino-acid chain: MPTSTLLWSVGSLALSSMVLPAAASSYELVETWKGEDFLTAFDFYTGADPTNGFVTYANQSYAESTGLVKVNSNGTFYMGVDHTTKLSTNGPGRESVRIGSNKYYDEGLFIIDLQHMPGSVCGTWPAFWSTGKNWPTDGEIDIIEGVNKNEANEIVLHTSGTCQVSSQKMSGTLTSTECGEDAGTTGCVVEGTQGSSGTPFNENGGGVYAMQWTDEFLKFWFFPRGSIPSSITKGDPDVAAFGTPMAHMEGSCSIAEHFKAQQFIFDTTFCGDWAGGVYSTSGCPVSDSSSSFKSCVAYVAENPTAFAESYWEINYIKIYQTGVAASASASASHVESAASVAETISAVREGTNSVVATTTAATIAVTSTADAETATTMAGATTVAASTETSAADENGSSASTSTHYVTMTTTICPIAESSSAAAALAGGSSEATEASNSEGSPAAATPSSVTGASAEANESESTSAAVTTPSTSTGASAEANGSESSSASEAGSVAGATPSSVSTTGASGEADSSEGASAAATPSNVSSTGASAEANGSEDSSASSEAKTVAPSIPSSVTGASAEANGNDSASSNAATASNVSGASAQAGDNESTPASAGANAGSSAAPSSVSGASAEANGSEGSSSHSSGSQAGAHSYGSVPSSAAAYGRPAPSSSSHAFATAPSSTGSSRVPTSAAAANNAAAATQGSSASGSNSGSSGHGSSSATTPSTPVFTGGANKLTLGASSVLSVLAFALLA.

Positions 1-24 are cleaved as a signal peptide; it reads MPTSTLLWSVGSLALSSMVLPAAA. Residues 31-283 enclose the GH16 domain; sequence ETWKGEDFLT…WAGGVYSTSG (253 aa). Residues Asn59 and Asn74 are each glycosylated (N-linked (GlcNAc...) asparagine). Residue Glu140 is the Nucleophile of the active site. Glu145 functions as the Proton donor in the catalytic mechanism. N-linked (GlcNAc...) asparagine glycosylation occurs at Asn396. 3 stretches are compositionally biased toward low complexity: residues 431-442, 452-499, and 507-522; these read SEATEASNSEGS, TGAS…AGAT, and GASGEADSSEGASAAA. The tract at residues 431–718 is disordered; that stretch reads SEATEASNSE…TPSTPVFTGG (288 aa). N-linked (GlcNAc...) asparagine glycans are attached at residues Asn459 and Asn482. Positions 523–532 are enriched in polar residues; that stretch reads TPSNVSSTGA. N-linked (GlcNAc...) asparagine glycosylation is found at Asn526 and Asn537. Residues 539–548 are compositionally biased toward polar residues; the sequence is SEDSSASSEA. Low complexity predominate over residues 561–587; sequence GASAEANGNDSASSNAATASNVSGASA. 4 N-linked (GlcNAc...) asparagine glycosylation sites follow: Asn569, Asn581, Asn592, and Asn620. Low complexity predominate over residues 597 to 641; sequence ASAGANAGSSAAPSSVSGASAEANGSEGSSSHSSGSQAGAHSYGS. The span at 654–673 shows a compositional bias: polar residues; the sequence is PSSSSHAFATAPSSTGSSRV. The segment covering 674–713 has biased composition (low complexity); the sequence is PTSAAAANNAAAATQGSSASGSNSGSSGHGSSSATTPSTP. Gly717 carries GPI-anchor amidated glycine lipidation. The propeptide at 718–739 is removed in mature form; it reads GANKLTLGASSVLSVLAFALLA.

Belongs to the glycosyl hydrolase 16 family.

Its subcellular location is the cell membrane. The enzyme catalyses Endohydrolysis of (1-&gt;3)- or (1-&gt;4)-linkages in beta-D-glucans when the glucose residue whose reducing group is involved in the linkage to be hydrolyzed is itself substituted at C-3.. Its function is as follows. Mixed-linked glucanase involved in the degradation of complex natural cellulosic substrates. The chain is Probable endo-1,3(4)-beta-glucanase An02g00850 from Aspergillus niger (strain ATCC MYA-4892 / CBS 513.88 / FGSC A1513).